A 144-amino-acid polypeptide reads, in one-letter code: Nucleoside diphosphate kinase (144 aa).

Residues Lys-9, Phe-57, Arg-85, Thr-91, Arg-102, and Asn-112 each coordinate ATP. Residue His-115 is the Pros-phosphohistidine intermediate of the active site.

Belongs to the NDK family. Homotetramer. The cofactor is Mg(2+).

It is found in the cytoplasm. The enzyme catalyses a 2'-deoxyribonucleoside 5'-diphosphate + ATP = a 2'-deoxyribonucleoside 5'-triphosphate + ADP. It carries out the reaction a ribonucleoside 5'-diphosphate + ATP = a ribonucleoside 5'-triphosphate + ADP. Functionally, major role in the synthesis of nucleoside triphosphates other than ATP. The ATP gamma phosphate is transferred to the NDP beta phosphate via a ping-pong mechanism, using a phosphorylated active-site intermediate. The chain is Nucleoside diphosphate kinase from Chlamydia pneumoniae (Chlamydophila pneumoniae).